Consider the following 255-residue polypeptide: tRNA (guanine-N(1)-)-methyltransferase (255 aa).

Residues glycine 113 and 133-138 (IGDYVL) each bind S-adenosyl-L-methionine.

It belongs to the RNA methyltransferase TrmD family. In terms of assembly, homodimer.

It localises to the cytoplasm. The catalysed reaction is guanosine(37) in tRNA + S-adenosyl-L-methionine = N(1)-methylguanosine(37) in tRNA + S-adenosyl-L-homocysteine + H(+). Functionally, specifically methylates guanosine-37 in various tRNAs. The chain is tRNA (guanine-N(1)-)-methyltransferase from Salmonella schwarzengrund (strain CVM19633).